We begin with the raw amino-acid sequence, 91 residues long: C-C motif chemokine 5 (91 aa).

An N-terminal signal peptide occupies residues 1–23 (MKVFAAALAVILATATFCTPASA). Intrachain disulfides connect cysteine 33/cysteine 57 and cysteine 34/cysteine 73.

This sequence belongs to the intercrine beta (chemokine CC) family.

It is found in the secreted. Its function is as follows. Chemoattractant for blood monocytes, memory T-helper cells and eosinophils. Causes the release of histamine from basophils and activates eosinophils. May activate several chemokine receptors including CCR1, CCR3, CCR4 and CCR5. May also be an agonist of the G protein-coupled receptor GPR75. Together with GPR75, may play a role in neuron survival through activation of a downstream signaling pathway involving the PI3, Akt and MAP kinases. By activating GPR75 may also play a role in insulin secretion by islet cells. This Equus caballus (Horse) protein is C-C motif chemokine 5 (CCL5).